A 134-amino-acid chain; its full sequence is Large ribosomal subunit protein eL32 (134 aa).

This sequence belongs to the eukaryotic ribosomal protein eL32 family.

This Spodoptera frugiperda (Fall armyworm) protein is Large ribosomal subunit protein eL32 (RpL32).